Reading from the N-terminus, the 298-residue chain is Serine/threonine-protein kinase 1 (298 aa).

In terms of domain architecture, Protein kinase spans 38–276 (FIATRPMFEG…FKSLVSHPWF (239 aa)). Residues 45–53 (FEGGRNNVF) and K65 contribute to the ATP site. D152 acts as the Proton acceptor in catalysis.

Belongs to the protein kinase superfamily. Ser/Thr protein kinase family.

It is found in the virion. The protein resides in the host cytoplasm. The catalysed reaction is L-seryl-[protein] + ATP = O-phospho-L-seryl-[protein] + ADP + H(+). The enzyme catalyses L-threonyl-[protein] + ATP = O-phospho-L-threonyl-[protein] + ADP + H(+). Essential for viral replication. It may mediate the virus' progression through DNA replication. The polypeptide is Serine/threonine-protein kinase 1 (Ornithodoros (relapsing fever ticks)).